The sequence spans 184 residues: ADP-ribosylation factor-like protein 8c (184 aa).

An intramembrane region (note=Mediates targeting to membranes) is located at residues 1–18 (MGLWDSLLNWLRSLFFKQ). GTP contacts are provided by residues 29–34 (NAGKTS), 48–51 (MIPT), 70–74 (DLGGQ), and 129–132 (NKID).

This sequence belongs to the small GTPase superfamily. Arf family. Interacts with tubulin.

Its subcellular location is the late endosome membrane. The protein localises to the lysosome membrane. It is found in the cytoplasm. It localises to the cytoskeleton. The protein resides in the spindle. Its function is as follows. May play a role in lysosome motility. May play a role in chromosome segregation. (Microbial infection) Component of tomato mosaic virus (ToMV) RNA replication complexes. Required for tobamovirus multiplication, especially for efficient negative-strand RNA synthesis and viral RNA capping. The chain is ADP-ribosylation factor-like protein 8c from Arabidopsis thaliana (Mouse-ear cress).